Reading from the N-terminus, the 96-residue chain is Phosphoribosyl-ATP pyrophosphatase (96 aa).

The protein belongs to the PRA-PH family.

The protein resides in the cytoplasm. The catalysed reaction is 1-(5-phospho-beta-D-ribosyl)-ATP + H2O = 1-(5-phospho-beta-D-ribosyl)-5'-AMP + diphosphate + H(+). Its pathway is amino-acid biosynthesis; L-histidine biosynthesis; L-histidine from 5-phospho-alpha-D-ribose 1-diphosphate: step 2/9. This Methanococcus maripaludis (strain C6 / ATCC BAA-1332) protein is Phosphoribosyl-ATP pyrophosphatase.